The sequence spans 344 residues: Cinnamoyl-CoA reductase 1 (344 aa).

Residue Ser7 is modified to Phosphoserine. NADP(+) contacts are provided by residues Gly17–Ala23, Arg42, Lys48, Asp68–Leu69, Thr88–Ser90, Tyr161, Lys165, Pro188–Val191, and Ser203. The cysteines at positions 154 and 162 are disulfide-linked. The Proton donor role is filled by Lys165. A disordered region spans residues Gln317–Ser344.

Belongs to the NAD(P)-dependent epimerase/dehydratase family. Dihydroflavonol-4-reductase subfamily. Expressed in leaves, stems and flowers.

It carries out the reaction (E)-cinnamaldehyde + NADP(+) + CoA = (E)-cinnamoyl-CoA + NADPH + H(+). The protein operates within aromatic compound metabolism; phenylpropanoid biosynthesis. In terms of biological role, involved in the latter stages of lignin biosynthesis. Catalyzes one of the last steps of monolignol biosynthesis, the conversion of cinnamoyl-CoAs into their corresponding cinnamaldehydes. The polypeptide is Cinnamoyl-CoA reductase 1 (Arabidopsis thaliana (Mouse-ear cress)).